The primary structure comprises 305 residues: Homoserine O-acetyltransferase (305 aa).

Cys142 (acyl-thioester intermediate) is an active-site residue. Lys163 and Ser192 together coordinate substrate. His235 (proton acceptor) is an active-site residue. Glu237 is an active-site residue. Substrate is bound at residue Arg249.

It belongs to the MetA family.

It is found in the cytoplasm. The enzyme catalyses L-homoserine + acetyl-CoA = O-acetyl-L-homoserine + CoA. It functions in the pathway amino-acid biosynthesis; L-methionine biosynthesis via de novo pathway; O-acetyl-L-homoserine from L-homoserine: step 1/1. Functionally, transfers an acetyl group from acetyl-CoA to L-homoserine, forming acetyl-L-homoserine. This Dinoroseobacter shibae (strain DSM 16493 / NCIMB 14021 / DFL 12) protein is Homoserine O-acetyltransferase.